The chain runs to 303 residues: Light-independent protochlorophyllide reductase iron-sulfur ATP-binding protein (303 aa).

The tract at residues 1-24 (MSSVLERPAAPAILPSRQDGEGSV) is disordered. ATP-binding positions include 47 to 52 (GIGKST) and Lys76. Ser51 lines the Mg(2+) pocket. [4Fe-4S] cluster contacts are provided by Cys132 and Cys166. Residues 217–218 (NR) and 241–243 (PDL) contribute to the ATP site.

This sequence belongs to the NifH/BchL/ChlL family. Homodimer. Protochlorophyllide reductase is composed of three subunits; BchL, BchN and BchB. [4Fe-4S] cluster serves as cofactor.

The enzyme catalyses chlorophyllide a + oxidized 2[4Fe-4S]-[ferredoxin] + 2 ADP + 2 phosphate = protochlorophyllide a + reduced 2[4Fe-4S]-[ferredoxin] + 2 ATP + 2 H2O. It participates in porphyrin-containing compound metabolism; bacteriochlorophyll biosynthesis (light-independent). Functionally, component of the dark-operative protochlorophyllide reductase (DPOR) that uses Mg-ATP and reduced ferredoxin to reduce ring D of protochlorophyllide (Pchlide) to form chlorophyllide a (Chlide). This reaction is light-independent. The L component serves as a unique electron donor to the NB-component of the complex, and binds Mg-ATP. In Rhodospirillum centenum (strain ATCC 51521 / SW), this protein is Light-independent protochlorophyllide reductase iron-sulfur ATP-binding protein.